Consider the following 185-residue polypeptide: Ribosome-recycling factor (185 aa).

The tract at residues 135-159 is disordered; the sequence is ANDEVKKLEKDKAITEDESKKGQDE.

It belongs to the RRF family.

The protein localises to the cytoplasm. In terms of biological role, responsible for the release of ribosomes from messenger RNA at the termination of protein biosynthesis. May increase the efficiency of translation by recycling ribosomes from one round of translation to another. The chain is Ribosome-recycling factor from Campylobacter curvus (strain 525.92).